The following is a 206-amino-acid chain: Ribosomal RNA large subunit methyltransferase E (206 aa).

S-adenosyl-L-methionine-binding residues include Gly-61, Trp-63, Asp-81, Asp-97, and Asp-122. The active-site Proton acceptor is the Lys-162.

It belongs to the class I-like SAM-binding methyltransferase superfamily. RNA methyltransferase RlmE family.

Its subcellular location is the cytoplasm. The enzyme catalyses uridine(2552) in 23S rRNA + S-adenosyl-L-methionine = 2'-O-methyluridine(2552) in 23S rRNA + S-adenosyl-L-homocysteine + H(+). Its function is as follows. Specifically methylates the uridine in position 2552 of 23S rRNA at the 2'-O position of the ribose in the fully assembled 50S ribosomal subunit. The protein is Ribosomal RNA large subunit methyltransferase E of Neisseria gonorrhoeae (strain ATCC 700825 / FA 1090).